A 432-amino-acid chain; its full sequence is CBL-interacting serine/threonine-protein kinase 17 (432 aa).

Positions 11 to 266 (YELGRTLGEG…IAGIKAHDWF (256 aa)) constitute a Protein kinase domain. ATP is bound by residues 17-25 (LGEGNSAKV) and lysine 40. The active-site Proton acceptor is aspartate 134. An activation loop region spans residues 152 to 181 (DFGLSALSQHYREDGLLHTTCGSPNYVAPE). Serine 156 is subject to Phosphoserine. Threonine 170 carries the phosphothreonine modification. Positions 301-325 (DSPTIINAFQLIGMSSFLDLSGFFE) constitute an NAF domain. Positions 331–360 (ERQIRFTSNSLAKDLLENIETIFTEMGFCL) are PPI.

Belongs to the protein kinase superfamily. CAMK Ser/Thr protein kinase family. SNF1 subfamily. As to quaternary structure, interacts with CBL1. Requires Mn(2+) as cofactor.

It catalyses the reaction L-seryl-[protein] + ATP = O-phospho-L-seryl-[protein] + ADP + H(+). The enzyme catalyses L-threonyl-[protein] + ATP = O-phospho-L-threonyl-[protein] + ADP + H(+). Functionally, CIPK serine-threonine protein kinases interact with CBL proteins. Binding of a CBL protein to the regulatory NAF domain of CIPK protein lead to the activation of the kinase in a calcium-dependent manner. This is CBL-interacting serine/threonine-protein kinase 17 (CIPK17) from Arabidopsis thaliana (Mouse-ear cress).